Consider the following 305-residue polypeptide: Deoxyhypusine hydroxylase (305 aa).

HEAT-like PBS-type repeat units lie at residues 54 to 80 and 87 to 113; these read LKHE…VLKD and VRHE…YAED. The Fe cation site is built by H56, H89, and E90. The segment at 137-160 is disordered; it reads EQTKDGTDENPYCSVDPAPPAQRK. 3 HEAT-like PBS-type repeats span residues 178–204, 209–235, and 242–268; these read DRYR…GLQC, FRHE…ALEK, and VRHE…YRKD. Residues H211, H244, and E245 each contribute to the Fe cation site.

This sequence belongs to the deoxyhypusine hydroxylase family. Fe(2+) serves as cofactor.

It catalyses the reaction [eIF5A protein]-deoxyhypusine + AH2 + O2 = [eIF5A protein]-hypusine + A + H2O. The protein operates within protein modification; eIF5A hypusination. Functionally, catalyzes the hydroxylation of the N(6)-(4-aminobutyl)-L-lysine intermediate produced by deoxyhypusine synthase/DHPS on a critical lysine of the eukaryotic translation initiation factor 5A/eIF-5A. This is the second step of the post-translational modification of that lysine into an unusual amino acid residue named hypusine. Hypusination is unique to mature eIF-5A factor and is essential for its function. This Danio rerio (Zebrafish) protein is Deoxyhypusine hydroxylase (dohh).